The following is an 878-amino-acid chain: Pyruvate, phosphate dikinase (878 aa).

The N-terminal stretch occupies residues 1 to 347 (MKKLIYYFGS…LYILQTRTAK (347 aa)). Arginine 96 is a binding site for ATP. The interval 348–404 (RTAIAAINIAVQMVEEKLISKEQALMRIDPESLNQLLHTRIDYSKGLTSIAEGLPAS) is linker 1. Residues 405–502 (PGAATGIAVF…VIKQGDIITI (98 aa)) form a central region. Threonine 457 carries the phosphothreonine; by PDRP1 modification. Residue histidine 459 is the Tele-phosphohistidine intermediate of the active site. Residues 503–537 (DGGSGKIFLGEMPLIQPTFSEESKLILDWADEISS) form a linker 2 region. The tract at residues 538 to 878 (LKVRANAETV…ASAQAKIKHG (341 aa)) is C-terminal. Substrate contacts are provided by arginine 565, arginine 621, glutamate 749, glycine 770, threonine 771, asparagine 772, and aspartate 773. Residue glutamate 749 participates in Mg(2+) binding. Aspartate 773 contributes to the Mg(2+) binding site. The active-site Proton donor is cysteine 835.

The protein belongs to the PEP-utilizing enzyme family. Homodimer. The cofactor is Mg(2+). Post-translationally, phosphorylation of Thr-457 in the dark inactivates the enzyme. Dephosphorylation upon light stimulation reactivates the enzyme.

It carries out the reaction pyruvate + phosphate + ATP = phosphoenolpyruvate + AMP + diphosphate + H(+). Its activity is regulated as follows. Activated by light-induced dephosphorylation. Inhibited by dark-induced phosphorylation. Both reactions are catalyzed by PDRP1. Catalyzes the reversible phosphorylation of pyruvate and phosphate. This chain is Pyruvate, phosphate dikinase (ppdK), found in Rickettsia felis (strain ATCC VR-1525 / URRWXCal2) (Rickettsia azadi).